An 827-amino-acid chain; its full sequence is Periplasmic nitrate reductase (827 aa).

Positions 1–32 form a signal peptide, tat-type signal; it reads MELSRRDFMKANAAVAAAAAAGIVLPVKNVQA. The region spanning 37 to 93 is the 4Fe-4S Mo/W bis-MGD-type domain; it reads IKWDKAPCRFCGTGCSVLVGTKDGRVVATQGDPDAEVNRGLNCIKGYFLSKIMYGAD. Residues cysteine 44, cysteine 47, cysteine 51, and cysteine 79 each contribute to the [4Fe-4S] cluster site. Mo-bis(molybdopterin guanine dinucleotide)-binding positions include lysine 81, glutamine 148, asparagine 173, cysteine 177, 210-217, 241-245, methionine 371, glutamine 375, asparagine 481, 507-508, lysine 530, aspartate 557, and 717-726; these read WGSNMAEM, STFEH, SD, and TGRVLEHWHT. Phenylalanine 793 is a substrate binding site. The Mo-bis(molybdopterin guanine dinucleotide) site is built by asparagine 801 and lysine 818.

This sequence belongs to the prokaryotic molybdopterin-containing oxidoreductase family. NasA/NapA/NarB subfamily. In terms of assembly, component of the periplasmic nitrate reductase NapAB complex composed of NapA and NapB. [4Fe-4S] cluster is required as a cofactor. It depends on Mo-bis(molybdopterin guanine dinucleotide) as a cofactor. Post-translationally, predicted to be exported by the Tat system. The position of the signal peptide cleavage has not been experimentally proven.

It is found in the periplasm. The enzyme catalyses 2 Fe(II)-[cytochrome] + nitrate + 2 H(+) = 2 Fe(III)-[cytochrome] + nitrite + H2O. Functionally, catalytic subunit of the periplasmic nitrate reductase complex NapAB. Receives electrons from NapB and catalyzes the reduction of nitrate to nitrite. This is Periplasmic nitrate reductase from Haemophilus ducreyi (strain 35000HP / ATCC 700724).